The primary structure comprises 697 residues: General transcription factor IIH subunit 1 (697 aa).

Residues 115–136 (LPVSASNGSNTTSPTNGTSPIN) show a composition bias toward low complexity. Disordered stretches follow at residues 115 to 141 (LPVSASNGSNTTSPTNGTSPINGTSPT) and 228 to 250 (KNDSTRSEKQHTGMPSNLLADVR). BSD domains are found at residues 174–231 (LSKL…KNDS) and 255–307 (TPNA…YFYR). A compositionally biased stretch (basic and acidic residues) spans 412-422 (KNLKKTKKDEN). The interval 412-462 (KNLKKTKKDENSTSTPTTTTTTTNTTNTTNTTTTTTTNNTTIKDPNLYNGD) is disordered. Residues 423–452 (STSTPTTTTTTTNTTNTTNTTTTTTTNNTT) show a composition bias toward low complexity.

This sequence belongs to the TFB1 family. As to quaternary structure, component of the 7-subunit TFIIH core complex composed of XPB/repB, XPD/repD, gtf2h1, gtf2h2, gtf2h3, gtf2h4 and gtf2h5, which is active in NER. The core complex associates with the 3-subunit CDK-activating kinase (CAK) module composed of cycH/cyclin H, cdk7 and mnat1 to form the 10-subunit holoenzyme (holo-TFIIH) active in transcription.

It localises to the nucleus. Component of the general transcription and DNA repair factor IIH (TFIIH) core complex, which is involved in general and transcription-coupled nucleotide excision repair (NER) of damaged DNA and, when complexed to CAK, in RNA transcription by RNA polymerase II. In NER, TFIIH acts by opening DNA around the lesion to allow the excision of the damaged oligonucleotide and its replacement by a new DNA fragment. In transcription, TFIIH has an essential role in transcription initiation. When the pre-initiation complex (PIC) has been established, TFIIH is required for promoter opening and promoter escape. Phosphorylation of the C-terminal tail (CTD) of the largest subunit of RNA polymerase II by the kinase module CAK controls the initiation of transcription. The chain is General transcription factor IIH subunit 1 (gtf2h1) from Dictyostelium discoideum (Social amoeba).